A 1083-amino-acid polypeptide reads, in one-letter code: RecBCD enzyme subunit RecB (1083 aa).

One can recognise a UvrD-like helicase ATP-binding domain in the interval 1-323 (MKVFDLLGPL…QTLGTNWRSD (323 aa)). The segment at 1–704 (MKVFDLLGPL…RGRAPGEAIV (704 aa)) is DNA-binding and helicase activity, interacts with RecC. Position 21–28 (21–28 (ASAGTGKT)) interacts with ATP. The UvrD-like helicase C-terminal domain occupies 349-607 (VQARHQGHRL…QIMTVWVSKG (259 aa)). The nuclease activity, interacts with RecD and RecA stretch occupies residues 765-1083 (AWKRTSYSGL…LSKLLDAEAP (319 aa)). Mg(2+) contacts are provided by His830, Asp962, and Asp975. Asp975 functions as the For nuclease activity in the catalytic mechanism.

It belongs to the helicase family. UvrD subfamily. As to quaternary structure, heterotrimer of RecB, RecC and RecD. All subunits contribute to DNA-binding. Interacts with RecA. It depends on Mg(2+) as a cofactor.

It catalyses the reaction Exonucleolytic cleavage (in the presence of ATP) in either 5'- to 3'- or 3'- to 5'-direction to yield 5'-phosphooligonucleotides.. It carries out the reaction Couples ATP hydrolysis with the unwinding of duplex DNA by translocating in the 3'-5' direction.. The enzyme catalyses ATP + H2O = ADP + phosphate + H(+). Its function is as follows. A helicase/nuclease that prepares dsDNA breaks (DSB) for recombinational DNA repair. Binds to DSBs and unwinds DNA via a highly rapid and processive ATP-dependent bidirectional helicase activity. Holoenzyme degrades any linearized DNA that is unable to undergo homologous recombination. In the holoenzyme this subunit contributes DNA-dependent ATPase activity, exonuclease activity and 3'-5' helicase activity. Unlike the case in E.coli, suppresses RecA-dependent homologous recombination, is instead required for single-strand annealing pathway repair of DSB. This chain is RecBCD enzyme subunit RecB, found in Mycolicibacterium smegmatis (strain ATCC 700084 / mc(2)155) (Mycobacterium smegmatis).